The chain runs to 303 residues: Haloalkane dehalogenase (303 aa).

In terms of domain architecture, AB hydrolase-1 spans 48–192; that stretch reads PVLLLHGEPS…GTVTKLSQAV (145 aa). Asp123 (nucleophile) is an active-site residue. Asp250 (proton donor) is an active-site residue. Catalysis depends on His280, which acts as the Proton acceptor.

Belongs to the haloalkane dehalogenase family. Type 1 subfamily. Monomer.

It catalyses the reaction 1-haloalkane + H2O = a halide anion + a primary alcohol + H(+). Catalyzes hydrolytic cleavage of carbon-halogen bonds in halogenated aliphatic compounds, leading to the formation of the corresponding primary alcohols, halide ions and protons. The protein is Haloalkane dehalogenase of Psychrobacter cryohalolentis (strain ATCC BAA-1226 / DSM 17306 / VKM B-2378 / K5).